We begin with the raw amino-acid sequence, 84 residues long: Sulfur carrier protein TusA (84 aa).

Cys21 functions as the Cysteine persulfide intermediate in the catalytic mechanism.

It belongs to the sulfur carrier protein TusA family.

It localises to the cytoplasm. Its function is as follows. Sulfur carrier protein which probably makes part of a sulfur-relay system. The polypeptide is Sulfur carrier protein TusA (Pseudomonas syringae pv. tomato (strain ATCC BAA-871 / DC3000)).